A 122-amino-acid chain; its full sequence is Alpha-amylase/trypsin inhibitor (122 aa).

Intrachain disulfides connect cysteine 6–cysteine 55, cysteine 20–cysteine 44, cysteine 29–cysteine 85, cysteine 45–cysteine 103, and cysteine 57–cysteine 114.

Belongs to the protease inhibitor I6 (cereal trypsin/alpha-amylase inhibitor) family. In terms of tissue distribution, seeds.

It localises to the secreted. Its function is as follows. May play a protective role against endo- and exogenous hydrolytic activities in the Ragi seeds. The sequence is that of Alpha-amylase/trypsin inhibitor from Eleusine coracana (Indian finger millet).